A 313-amino-acid polypeptide reads, in one-letter code: Beta-ketoacyl-[acyl-carrier-protein] synthase III (313 aa).

Catalysis depends on residues cysteine 112 and histidine 238. The tract at residues glutamine 239–arginine 243 is ACP-binding. Asparagine 268 is an active-site residue.

This sequence belongs to the thiolase-like superfamily. FabH family. In terms of assembly, homodimer.

The protein resides in the cytoplasm. It catalyses the reaction malonyl-[ACP] + acetyl-CoA + H(+) = 3-oxobutanoyl-[ACP] + CO2 + CoA. It functions in the pathway lipid metabolism; fatty acid biosynthesis. Functionally, catalyzes the condensation reaction of fatty acid synthesis by the addition to an acyl acceptor of two carbons from malonyl-ACP. Catalyzes the first condensation reaction which initiates fatty acid synthesis and may therefore play a role in governing the total rate of fatty acid production. Possesses both acetoacetyl-ACP synthase and acetyl transacylase activities. Its substrate specificity determines the biosynthesis of branched-chain and/or straight-chain of fatty acids. The polypeptide is Beta-ketoacyl-[acyl-carrier-protein] synthase III (Staphylococcus haemolyticus (strain JCSC1435)).